Consider the following 371-residue polypeptide: MDPDRQADIAALDCTLTTVERVLDVEGLRSRIEKLEHEASDPHLWDDQTRAQRVTSELSHTQGELRRVEELRRRLDDLPVLYELAAEEAGAAAADAVAEADAELKSLRADIEATEVRTLLSGEYDEREALVTIRSGAGGVDAADWAEMLMRMYIRWAEQHKYPVEVFDTSYAEEAGIKSATFAVHAPFAYGTLSVEQGTHRLVRISPFDNQSRRQTSFAEVEVLPVVETTDHIDIPEGDVRVDVYRSSGPGGQSVNTTDSAVRLTHIPSGIVVTCQNEKSQLQNKIAAMRVLQAKLLERKRLEERAELDALKADGGSSWGNQMRSYVLHPYQMVKDLRTEYEVGNPAAVLDGDLDGFLEAGIRWRNRRNDD.

Position 253 is an N5-methylglutamine (Gln-253).

The protein belongs to the prokaryotic/mitochondrial release factor family. Methylated by PrmC. Methylation increases the termination efficiency of RF2.

The protein resides in the cytoplasm. In terms of biological role, peptide chain release factor 2 directs the termination of translation in response to the peptide chain termination codons UGA and UAA. The protein is Peptide chain release factor 2 (prfB) of Mycobacterium bovis (strain ATCC BAA-935 / AF2122/97).